The primary structure comprises 327 residues: Glycerol-3-phosphate dehydrogenase [NAD(P)+] (327 aa).

3 residues coordinate NADPH: Phe13, Arg34, and Lys107. Sn-glycerol 3-phosphate is bound by residues Lys107 and Gly135. Residue Ala139 coordinates NADPH. The sn-glycerol 3-phosphate site is built by Lys190, Asp243, Ser253, Arg254, and Asn255. Lys190 serves as the catalytic Proton acceptor. Arg254 serves as a coordination point for NADPH. NADPH-binding residues include Val276 and Glu277.

It belongs to the NAD-dependent glycerol-3-phosphate dehydrogenase family.

Its subcellular location is the cytoplasm. The catalysed reaction is sn-glycerol 3-phosphate + NAD(+) = dihydroxyacetone phosphate + NADH + H(+). It carries out the reaction sn-glycerol 3-phosphate + NADP(+) = dihydroxyacetone phosphate + NADPH + H(+). It participates in membrane lipid metabolism; glycerophospholipid metabolism. In terms of biological role, catalyzes the reduction of the glycolytic intermediate dihydroxyacetone phosphate (DHAP) to sn-glycerol 3-phosphate (G3P), the key precursor for phospholipid synthesis. In Rhizobium etli (strain CIAT 652), this protein is Glycerol-3-phosphate dehydrogenase [NAD(P)+].